A 246-amino-acid chain; its full sequence is Putative outer membrane protein YiaT (246 aa).

The first 21 residues, 1–21, serve as a signal peptide directing secretion; it reads MLINRNIVALFALPFMASATA.

Belongs to the MipA/OmpV family.

It localises to the cell outer membrane. The sequence is that of Putative outer membrane protein YiaT (yiaT) from Escherichia coli O157:H7.